Here is a 466-residue protein sequence, read N- to C-terminus: MIATGKIIQIIGAVVDVEFDQNSVPKIYNALEVKNKKIQLILEVQQQLGAGIVRTIAMGSTNGLKRGLIVIDLGHYIKVPVGQATLGRIINVLGKTIDNKGPLKNLDNSKLEYWEIHRSAPSYQEQASSQEILETGIKVIDLICPFSKGGKVGLFGGAGVGKTVNMMELIRNIAIEHSGYSVFTGVGERTREGNDFYHEMKDSKVLDKVSLVYGQMNEPPGNRLRVAFTGLTIAEKFRDEGRDVLLFIDNIYRYTLAGTEVSALLGRMPSAVGYQPTLAEEMGLLQERITSTKEGSITSVQAVYVPADDLTDPSPATTFAHLDSTVTLSRQIAALGIYPAIDPLNSTSRQLDPYIVGDEHYDTARGVQSILQRYQELKDIIAILGMDELSQEDKILVSRARKIQRFLSQPFFVAEVFTGFPGKYVSLKDNIRAFKGIIGGEFDNLPEQAFYMVGTIEEVIKKAKLL.

ATP is bound at residue glycine 156 to threonine 163.

The protein belongs to the ATPase alpha/beta chains family. As to quaternary structure, F-type ATPases have 2 components, CF(1) - the catalytic core - and CF(0) - the membrane proton channel. CF(1) has five subunits: alpha(3), beta(3), gamma(1), delta(1), epsilon(1). CF(0) has three main subunits: a(1), b(2) and c(9-12). The alpha and beta chains form an alternating ring which encloses part of the gamma chain. CF(1) is attached to CF(0) by a central stalk formed by the gamma and epsilon chains, while a peripheral stalk is formed by the delta and b chains.

The protein localises to the cell membrane. The catalysed reaction is ATP + H2O + 4 H(+)(in) = ADP + phosphate + 5 H(+)(out). Its function is as follows. Produces ATP from ADP in the presence of a proton gradient across the membrane. The catalytic sites are hosted primarily by the beta subunits. This is ATP synthase subunit beta from Buchnera aphidicola subsp. Schizaphis graminum (strain Sg).